A 1157-amino-acid chain; its full sequence is Hephaestin (1157 aa).

The first 23 residues, 1–23 (MKAGHLLWALLLMHSLCSLPTDG), serve as a signal peptide directing secretion. Plastocyanin-like domains are found at residues 24–206 (AIRN…LITC), 218–366 (QRKD…VDSC), 370–559 (PPVE…LLVC), 569–717 (KQKG…VSQC), 730–902 (ASRV…LVIC), and 910–1066 (NGGR…SHEE). At 24–1109 (AIRNYYLGIQ…PVKNVEILSS (1086 aa)) the chain is on the extracellular side. 2 N-linked (GlcNAc...) asparagine glycosylation sites follow: Asn49 and Asn54. Na(+) contacts are provided by Gly70 and Tyr73. The Cu(2+) site is built by His126 and His128. His126 is an O2 binding site. 3 residues coordinate Ca(2+): Lys134, Asp152, and Asp153. Asn164 carries an N-linked (GlcNAc...) asparagine glycan. A disulfide bridge connects residues Cys180 and Cys206. 2 residues coordinate Cu(2+): His186 and His188. His186 is an O2 binding site. Asn236 is a glycosylation site (N-linked (GlcNAc...) asparagine). Position 265 (Ser265) interacts with Na(+). A disulfide bond links Cys285 and Cys366. Cu(2+)-binding residues include His304, Cys347, and His352. 3 residues coordinate Na(+): Tyr416, Gly425, and Tyr428. The cysteines at positions 533 and 559 are disulfide-linked. Asn587 carries an N-linked (GlcNAc...) asparagine glycan. Residue Ser616 coordinates Na(+). A disulfide bridge connects residues Cys636 and Cys717. Cu(2+) contacts are provided by His655, Cys698, His703, and Met708. N-linked (GlcNAc...) asparagine glycans are attached at residues Asn713 and Asn757. Residues Phe768 and Gly777 each contribute to the Na(+) site. A disulfide bridge links Cys876 with Cys902. A glycan (N-linked (GlcNAc...) asparagine) is linked at Asn930. Positions 999, 1002, 1004, 1044, 1045, 1046, 1050, and 1055 each coordinate Cu(2+). Positions 1002 and 1004 each coordinate O2. O2 is bound at residue His1046. Residues 1110–1130 (ALIAICVVLLLIALALGGVVW) traverse the membrane as a helical segment. The Cytoplasmic portion of the chain corresponds to 1131–1157 (YQHRQRKLRRNRRSILDDSFKLLSLKQ). Phosphoserine is present on residues Ser1144, Ser1149, and Ser1154.

Belongs to the multicopper oxidase family. In terms of assembly, part of a complex composed of SLC40A1/ferroportin, TF/transferrin and HEPH/hephaestin that transfers iron from cells to transferrin. Requires Cu cation as cofactor. As to expression, highly expressed in small intestine and colon.

The protein localises to the basolateral cell membrane. It carries out the reaction 4 Fe(2+) + O2 + 4 H(+) = 4 Fe(3+) + 2 H2O. In terms of biological role, plasma membrane ferroxidase that mediates the extracellular conversion of ferrous/Fe(2+) iron into its ferric/Fe(3+) form. Couples ferroportin which specifically exports ferrous/Fe(2+) iron from cells to transferrin that only binds and shuttles extracellular ferric/Fe(3+) iron throughout the body. By helping iron transfer from cells to blood mainly contributes to dietary iron absorption by the intestinal epithelium and more generally regulates iron levels in the body. This is Hephaestin from Rattus norvegicus (Rat).